The following is a 128-amino-acid chain: DELTA-urthionin-Uf1a (128 aa).

The signal sequence occupies residues 1–24 (MEGKTVIVSLLLLSIVVGQIQVEA). Disulfide bonds link cysteine 27–cysteine 64, cysteine 28–cysteine 56, and cysteine 40–cysteine 50. Positions 67–128 (LSIPEVTGEA…LCTKNSIETA (62 aa)) are cleaved as a propeptide — acidic domain.

The protein belongs to the plant thionin (TC 1.C.44) family. As to expression, expressed in trichomes, that are stiff epidermal hairs located on the surface of petioles and leaves.

It localises to the secreted. Its function is as follows. Plant defense protein that causes pain by probable disruption of cell membranes. Shows cytotoxic activity against the neuroblastoma cell line SH-SY5Y and slightly weaker activity against several non-neuronal cell lines. In vivo, intraplantar injection into mice causes several nocifensive responses, along with swelling and redness. The polypeptide is DELTA-urthionin-Uf1a (Urtica ferox (Tree nettle)).